The chain runs to 170 residues: Adenine phosphoribosyltransferase (170 aa).

This sequence belongs to the purine/pyrimidine phosphoribosyltransferase family. As to quaternary structure, homodimer.

The protein localises to the cytoplasm. The catalysed reaction is AMP + diphosphate = 5-phospho-alpha-D-ribose 1-diphosphate + adenine. The protein operates within purine metabolism; AMP biosynthesis via salvage pathway; AMP from adenine: step 1/1. Functionally, catalyzes a salvage reaction resulting in the formation of AMP, that is energically less costly than de novo synthesis. The sequence is that of Adenine phosphoribosyltransferase from Geobacillus thermodenitrificans (strain NG80-2).